Here is a 482-residue protein sequence, read N- to C-terminus: uncharacterized protein (482 aa).

In terms of domain architecture, HTH gntR-type spans L12–N80. Residues Q40–E59 constitute a DNA-binding region (H-T-H motif). K325 carries the post-translational modification N6-(pyridoxal phosphate)lysine.

The protein in the C-terminal section; belongs to the class-I pyridoxal-phosphate-dependent aminotransferase family. The cofactor is pyridoxal 5'-phosphate.

This is an uncharacterized protein from Bacillus subtilis (strain 168).